The chain runs to 199 residues: Small ribosomal subunit protein uS5 (199 aa).

The interval methionine 1–lysine 29 is disordered. Over residues serine 12 to proline 27 the composition is skewed to basic and acidic residues. An S5 DRBM domain is found at phenylalanine 32–valine 95.

Belongs to the universal ribosomal protein uS5 family. Part of the 30S ribosomal subunit. Contacts proteins S4 and S8.

With S4 and S12 plays an important role in translational accuracy. Functionally, located at the back of the 30S subunit body where it stabilizes the conformation of the head with respect to the body. In Acidothermus cellulolyticus (strain ATCC 43068 / DSM 8971 / 11B), this protein is Small ribosomal subunit protein uS5.